Reading from the N-terminus, the 269-residue chain is D-aminoacyl-tRNA deacylase (269 aa).

This sequence belongs to the DtdA deacylase family. Monomer. Requires Zn(2+) as cofactor.

The catalysed reaction is a D-aminoacyl-tRNA + H2O = a tRNA + a D-alpha-amino acid + H(+). The enzyme catalyses glycyl-tRNA(Ala) + H2O = tRNA(Ala) + glycine + H(+). D-aminoacyl-tRNA deacylase with broad substrate specificity. By recycling D-aminoacyl-tRNA to D-amino acids and free tRNA molecules, this enzyme counteracts the toxicity associated with the formation of D-aminoacyl-tRNA entities in vivo. This is D-aminoacyl-tRNA deacylase from Caldivirga maquilingensis (strain ATCC 700844 / DSM 13496 / JCM 10307 / IC-167).